Here is a 185-residue protein sequence, read N- to C-terminus: Ribosome-recycling factor (185 aa).

Belongs to the RRF family.

It is found in the cytoplasm. In terms of biological role, responsible for the release of ribosomes from messenger RNA at the termination of protein biosynthesis. May increase the efficiency of translation by recycling ribosomes from one round of translation to another. This Thioalkalivibrio sulfidiphilus (strain HL-EbGR7) protein is Ribosome-recycling factor.